Reading from the N-terminus, the 434-residue chain is Eukaryotic peptide chain release factor subunit 1-1 (434 aa).

The protein belongs to the eukaryotic release factor 1 family. As to quaternary structure, heterodimer of two subunits, one of which binds GTP.

The protein localises to the cytoplasm. Functionally, directs the termination of nascent peptide synthesis (translation) in response to the termination codons UAA, UAG and UGA. Modulates plant growth and development. The polypeptide is Eukaryotic peptide chain release factor subunit 1-1 (Brassica oleracea var. botrytis (Cauliflower)).